The primary structure comprises 431 residues: Protein S-Myc (431 aa).

Tyr-36 bears the Phosphotyrosine; by Tyr-kinases mark. The region spanning 348–400 (ERRRNHNRMERQRRDIMRSSFLNLRDLVPELVHNEKAAKVVILKKATEYIHTL) is the bHLH domain. The interval 400–421 (LQADESKLLVERKKLYERQQQL) is leucine-zipper.

In terms of assembly, efficient DNA binding requires dimerization with another bHLH protein.

It localises to the nucleus. Functionally, has apoptosis-inducing activity. In Mus musculus (Mouse), this protein is Protein S-Myc (Mycs).